Here is a 251-residue protein sequence, read N- to C-terminus: uncharacterized protein (251 aa).

The next 7 helical transmembrane spans lie at 48 to 68 (WMVG…VELI), 88 to 108 (VLWG…LVAN), 110 to 130 (IPLL…FIWV), 132 to 152 (AMVW…GSSF), 158 to 178 (IGVS…GLFV), 184 to 204 (IIGC…MPVL), and 209 to 229 (GVSW…AYLL).

To M.tuberculosis Rv1337.

It is found in the cell membrane. This is an uncharacterized protein from Mycobacterium leprae (strain TN).